Here is an 872-residue protein sequence, read N- to C-terminus: G-type lectin S-receptor-like serine/threonine-protein kinase At5g24080 (872 aa).

An N-terminal signal peptide occupies residues 1–25 (MSSFHFYFPSVGLFSFFCFFLVSLA). At 26 to 472 (TEPHIGLGSK…SRKSHGLRQK (447 aa)) the chain is on the extracellular side. The Bulb-type lectin domain occupies 30 to 149 (IGLGSKLKAS…EVTAGPTIWQ (120 aa)). N-linked (GlcNAc...) asparagine glycosylation is found at Asn49, Asn117, Asn208, Asn219, Asn261, and Asn294. Residues 306 to 344 (VSNPCDIAGICGNGVCNLDRTKKNADCLCLPGSVKLPDQ) form the EGF-like; atypical domain. 2 disulfides stabilise this stretch: Cys310/Cys321 and Cys316/Cys332. Residues Asn353, Asn367, and Asn390 are each glycosylated (N-linked (GlcNAc...) asparagine). In terms of domain architecture, PAN spans 360-447 (CESNINRNGS…PGSTLFVKTR (88 aa)). 2 cysteine pairs are disulfide-bonded: Cys400-Cys424 and Cys404-Cys410. 2 N-linked (GlcNAc...) asparagine glycosylation sites follow: Asn449 and Asn459. A helical membrane pass occupies residues 473 to 493 (VLVIPIVVGMLVLVALLGMLL). Over 494-872 (YYNLDRKRTL…TCSYSSMSPR (379 aa)) the chain is Cytoplasmic. At Thr521 the chain carries Phosphothreonine. The Protein kinase domain maps to 530–810 (NNFSQLLGSG…LEGTSDEINL (281 aa)). ATP is bound by residues 536-544 (LGSGGFGTV) and Lys558. A Phosphotyrosine modification is found at Tyr603. The tract at residues 619 to 637 (EQTANLLDWRTRFEIAVAT) is caM-binding. Asp656 functions as the Proton acceptor in the catalytic mechanism. Phosphothreonine is present on residues Thr690 and Thr695.

This sequence belongs to the protein kinase superfamily. Ser/Thr protein kinase family.

The protein resides in the cell membrane. It catalyses the reaction L-seryl-[protein] + ATP = O-phospho-L-seryl-[protein] + ADP + H(+). It carries out the reaction L-threonyl-[protein] + ATP = O-phospho-L-threonyl-[protein] + ADP + H(+). This is G-type lectin S-receptor-like serine/threonine-protein kinase At5g24080 from Arabidopsis thaliana (Mouse-ear cress).